The sequence spans 141 residues: MATIKVDVVSAEEQIFSGQAKFVALPGEAGELGILPGHTPLITRIRPGAVRIESENGEEEFVFVAGGILEVQPGAVTVLADTAIRGKDLDEAKAEQARKRAEEALQNTGSNLEYATAQAELAYATAQLAAIQRLRKLRGQH.

It belongs to the ATPase epsilon chain family. As to quaternary structure, F-type ATPases have 2 components, CF(1) - the catalytic core - and CF(0) - the membrane proton channel. CF(1) has five subunits: alpha(3), beta(3), gamma(1), delta(1), epsilon(1). CF(0) has three main subunits: a, b and c.

The protein resides in the cell inner membrane. In terms of biological role, produces ATP from ADP in the presence of a proton gradient across the membrane. The sequence is that of ATP synthase epsilon chain from Paraburkholderia phymatum (strain DSM 17167 / CIP 108236 / LMG 21445 / STM815) (Burkholderia phymatum).